The chain runs to 203 residues: RNA annealing protein YRA2 (203 aa).

An N-acetylmethionine modification is found at M1. Disordered stretches follow at residues 1-60 (MDKA…REEP) and 134-203 (EIYQ…YMKG). The span at 11–20 (NSHTDSSSNH) shows a compositional bias: polar residues. Residues 47–60 (SRSKDRLYREREEP) are compositionally biased toward basic and acidic residues. One can recognise an RRM domain in the interval 64-138 (KRIRISKIPL…AKIEVEIYQP (75 aa)). Basic residues-rich tracts occupy residues 139 to 153 (QRKHSRMNAHNRRKQ) and 163 to 180 (PGSHYRQRPNRVSKKNKG).

It belongs to the YRA1 family. Associates with mRNPs. Interacts with YRA1.

The protein resides in the nucleus. In terms of biological role, involved in export of poly(A) mRNAs from the nucleus. Recruited to the coding sequences as well as poly-A sites of active genes. This is RNA annealing protein YRA2 (YRA2) from Saccharomyces cerevisiae (strain RM11-1a) (Baker's yeast).